The primary structure comprises 265 residues: Phosphatidylglycerol--prolipoprotein diacylglyceryl transferase (265 aa).

7 helical membrane passes run 11-31 (AVSI…FGFI), 56-76 (MVTW…ILFY), 91-111 (IWHG…AVWL), 120-140 (FLSV…FGRI), 173-193 (QLYE…WFSG), 198-218 (VGAV…AVEF), and 233-253 (WLTM…WLLL). Arg139 lines the a 1,2-diacyl-sn-glycero-3-phospho-(1'-sn-glycerol) pocket.

The protein belongs to the Lgt family.

Its subcellular location is the cell inner membrane. It catalyses the reaction L-cysteinyl-[prolipoprotein] + a 1,2-diacyl-sn-glycero-3-phospho-(1'-sn-glycerol) = an S-1,2-diacyl-sn-glyceryl-L-cysteinyl-[prolipoprotein] + sn-glycerol 1-phosphate + H(+). It functions in the pathway protein modification; lipoprotein biosynthesis (diacylglyceryl transfer). In terms of biological role, catalyzes the transfer of the diacylglyceryl group from phosphatidylglycerol to the sulfhydryl group of the N-terminal cysteine of a prolipoprotein, the first step in the formation of mature lipoproteins. The protein is Phosphatidylglycerol--prolipoprotein diacylglyceryl transferase of Nitratidesulfovibrio vulgaris (strain DSM 19637 / Miyazaki F) (Desulfovibrio vulgaris).